The primary structure comprises 255 residues: Tritrans,polycis-undecaprenyl-diphosphate synthase (geranylgeranyl-diphosphate specific) (255 aa).

Aspartate 34 is an active-site residue. A Mg(2+)-binding site is contributed by aspartate 34. Substrate-binding positions include glycine 35–arginine 38, histidine 51, and serine 79–glutamate 81. Asparagine 82 functions as the Proton acceptor in the catalytic mechanism. Substrate-binding positions include phenylalanine 83, arginine 85, arginine 204, and arginine 210–serine 212. Glutamate 223 provides a ligand contact to Mg(2+).

It belongs to the UPP synthase family. As to quaternary structure, homodimer. Mg(2+) serves as cofactor.

The enzyme catalyses geranylgeranyl diphosphate + 7 isopentenyl diphosphate = tri-trans,hepta-cis-undecaprenyl diphosphate + 7 diphosphate. In terms of biological role, catalyzes the sequential condensation of isopentenyl diphosphate (IPP) with geranylgeranyl diphosphate (GGPP) to yield (2Z,6Z,10Z,14Z,18Z,22Z,26Z,30E,34E,38E)-undecaprenyl diphosphate (tritrans,heptacis-UPP). It is probably the precursor of glycosyl carrier lipids. The chain is Tritrans,polycis-undecaprenyl-diphosphate synthase (geranylgeranyl-diphosphate specific) from Picrophilus torridus (strain ATCC 700027 / DSM 9790 / JCM 10055 / NBRC 100828 / KAW 2/3).